Here is a 233-residue protein sequence, read N- to C-terminus: Phosphoribosylformylglycinamidine synthase subunit PurQ (233 aa).

A Glutamine amidotransferase type-1 domain is found at 3–233; it reads SAVLVFPGIN…GLVAHLERAA (231 aa). The active-site Nucleophile is the Cys87. Residues His204 and Glu206 contribute to the active site.

In terms of assembly, part of the FGAM synthase complex composed of 1 PurL, 1 PurQ and 2 PurS subunits.

Its subcellular location is the cytoplasm. It catalyses the reaction N(2)-formyl-N(1)-(5-phospho-beta-D-ribosyl)glycinamide + L-glutamine + ATP + H2O = 2-formamido-N(1)-(5-O-phospho-beta-D-ribosyl)acetamidine + L-glutamate + ADP + phosphate + H(+). It carries out the reaction L-glutamine + H2O = L-glutamate + NH4(+). The protein operates within purine metabolism; IMP biosynthesis via de novo pathway; 5-amino-1-(5-phospho-D-ribosyl)imidazole from N(2)-formyl-N(1)-(5-phospho-D-ribosyl)glycinamide: step 1/2. Its function is as follows. Part of the phosphoribosylformylglycinamidine synthase complex involved in the purines biosynthetic pathway. Catalyzes the ATP-dependent conversion of formylglycinamide ribonucleotide (FGAR) and glutamine to yield formylglycinamidine ribonucleotide (FGAM) and glutamate. The FGAM synthase complex is composed of three subunits. PurQ produces an ammonia molecule by converting glutamine to glutamate. PurL transfers the ammonia molecule to FGAR to form FGAM in an ATP-dependent manner. PurS interacts with PurQ and PurL and is thought to assist in the transfer of the ammonia molecule from PurQ to PurL. This Nitrobacter winogradskyi (strain ATCC 25391 / DSM 10237 / CIP 104748 / NCIMB 11846 / Nb-255) protein is Phosphoribosylformylglycinamidine synthase subunit PurQ.